A 902-amino-acid polypeptide reads, in one-letter code: Cytosolic 10-formyltetrahydrofolate dehydrogenase (902 aa).

Residues 1 to 310 (MKIAVIGQSL…LASNFFKGAA (310 aa)) form a hydrolase domain region. S9 is modified (phosphoserine). K38 carries the post-translational modification N6-succinyllysine. 88-90 (QFI) provides a ligand contact to (6R)-10-formyltetrahydrofolate. Residue H106 is the Proton donor of the active site. D142 contributes to the (6R)-10-formyltetrahydrofolate binding site. The Carrier domain occupies 318–395 (EAELVTAEAV…DFIQLLVRKL (78 aa)). At S354 the chain carries O-(pantetheine 4'-phosphoryl)serine. Residues 417 to 902 (TIRIPHQLFI…LRVKTVTFEY (486 aa)) form an aldehyde dehydrogenase domain region. Residues 571 to 573 (IPW) and 597 to 600 (KPAQ) contribute to the NADP(+) site. Phosphoserine is present on residues S629 and S631. NADP(+)-binding positions include 630-635 (GSLVGQ) and 650-651 (GS). K660 bears the N6-succinyllysine mark. Residue E673 is the Proton acceptor of the active site. 673–674 (EL) serves as a coordination point for NADP(+). Residue C707 is the Proton donor of the active site. Position 757 (K757) interacts with NADP(+). Residue K767 is modified to N6-succinyllysine. 804–806 (ESF) contributes to the NADP(+) binding site. Phosphoserine is present on S825. An N6-acetyllysine modification is found at K882.

The protein in the N-terminal section; belongs to the GART family. In the C-terminal section; belongs to the aldehyde dehydrogenase family. ALDH1L subfamily. Homotetramer. Phosphopantetheinylation at Ser-354 by AASDHPPT is required for the formyltetrahydrofolate dehydrogenase activity.

It is found in the cytoplasm. It localises to the cytosol. It carries out the reaction (6R)-10-formyltetrahydrofolate + NADP(+) + H2O = (6S)-5,6,7,8-tetrahydrofolate + CO2 + NADPH + H(+). Cytosolic 10-formyltetrahydrofolate dehydrogenase that catalyzes the NADP(+)-dependent conversion of 10-formyltetrahydrofolate to tetrahydrofolate and carbon dioxide. May also have an NADP(+)-dependent aldehyde dehydrogenase activity towards formaldehyde, acetaldehyde, propionaldehyde, and benzaldehyde. The polypeptide is Cytosolic 10-formyltetrahydrofolate dehydrogenase (Pongo abelii (Sumatran orangutan)).